The sequence spans 91 residues: Alpha-latrotoxin associated low molecular weight protein SGV150-311 (91 aa).

Residues 1 to 18 (MNVLHFLILLMSVVSVFC) form the signal peptide.

It belongs to the arthropod CHH/MIH/GIH/VIH hormone family. As to expression, expressed by the venom gland.

The protein resides in the secreted. Functionally, may increase the toxicity of alpha-latrotoxin and/or other venom components. Is non-toxic to mice and to the cockroach Periplaneta americana. The protein is Alpha-latrotoxin associated low molecular weight protein SGV150-311 of Steatoda grossa (False black widow).